Here is a 558-residue protein sequence, read N- to C-terminus: Dihydroxy-acid dehydratase (558 aa).

Aspartate 81 serves as a coordination point for Mg(2+). Residue cysteine 122 coordinates [2Fe-2S] cluster. Mg(2+) contacts are provided by aspartate 123 and lysine 124. N6-carboxylysine is present on lysine 124. Cysteine 195 contributes to the [2Fe-2S] cluster binding site. Glutamate 447 serves as a coordination point for Mg(2+). The Proton acceptor role is filled by serine 473.

It belongs to the IlvD/Edd family. As to quaternary structure, homodimer. [2Fe-2S] cluster serves as cofactor. The cofactor is Mg(2+).

The enzyme catalyses (2R)-2,3-dihydroxy-3-methylbutanoate = 3-methyl-2-oxobutanoate + H2O. It catalyses the reaction (2R,3R)-2,3-dihydroxy-3-methylpentanoate = (S)-3-methyl-2-oxopentanoate + H2O. The protein operates within amino-acid biosynthesis; L-isoleucine biosynthesis; L-isoleucine from 2-oxobutanoate: step 3/4. Its pathway is amino-acid biosynthesis; L-valine biosynthesis; L-valine from pyruvate: step 3/4. In terms of biological role, functions in the biosynthesis of branched-chain amino acids. Catalyzes the dehydration of (2R,3R)-2,3-dihydroxy-3-methylpentanoate (2,3-dihydroxy-3-methylvalerate) into 2-oxo-3-methylpentanoate (2-oxo-3-methylvalerate) and of (2R)-2,3-dihydroxy-3-methylbutanoate (2,3-dihydroxyisovalerate) into 2-oxo-3-methylbutanoate (2-oxoisovalerate), the penultimate precursor to L-isoleucine and L-valine, respectively. In Bacillus velezensis (strain DSM 23117 / BGSC 10A6 / LMG 26770 / FZB42) (Bacillus amyloliquefaciens subsp. plantarum), this protein is Dihydroxy-acid dehydratase.